Here is a 274-residue protein sequence, read N- to C-terminus: Large ribosomal subunit protein uL2 (274 aa).

Residues valine 223–lysine 274 are disordered.

It belongs to the universal ribosomal protein uL2 family. Part of the 50S ribosomal subunit. Forms a bridge to the 30S subunit in the 70S ribosome.

One of the primary rRNA binding proteins. Required for association of the 30S and 50S subunits to form the 70S ribosome, for tRNA binding and peptide bond formation. It has been suggested to have peptidyltransferase activity; this is somewhat controversial. Makes several contacts with the 16S rRNA in the 70S ribosome. This is Large ribosomal subunit protein uL2 from Shewanella oneidensis (strain ATCC 700550 / JCM 31522 / CIP 106686 / LMG 19005 / NCIMB 14063 / MR-1).